Consider the following 207-residue polypeptide: Ribosomal RNA small subunit methyltransferase G (207 aa).

S-adenosyl-L-methionine is bound by residues glycine 73, leucine 78, 124-125, and arginine 139; that span reads VE.

Belongs to the methyltransferase superfamily. RNA methyltransferase RsmG family.

It is found in the cytoplasm. The enzyme catalyses guanosine(527) in 16S rRNA + S-adenosyl-L-methionine = N(7)-methylguanosine(527) in 16S rRNA + S-adenosyl-L-homocysteine. Functionally, specifically methylates the N7 position of guanine in position 527 of 16S rRNA. The polypeptide is Ribosomal RNA small subunit methyltransferase G (Salmonella choleraesuis (strain SC-B67)).